The primary structure comprises 214 residues: tRNA (guanine-N(7)-)-methyltransferase (214 aa).

Residues E44, E69, D96, and D118 each coordinate S-adenosyl-L-methionine. D118 is a catalytic residue. Substrate contacts are provided by residues K122, D154, and 191–194 (TEYE).

It belongs to the class I-like SAM-binding methyltransferase superfamily. TrmB family.

The enzyme catalyses guanosine(46) in tRNA + S-adenosyl-L-methionine = N(7)-methylguanosine(46) in tRNA + S-adenosyl-L-homocysteine. The protein operates within tRNA modification; N(7)-methylguanine-tRNA biosynthesis. Functionally, catalyzes the formation of N(7)-methylguanine at position 46 (m7G46) in tRNA. In Listeria monocytogenes serotype 4a (strain HCC23), this protein is tRNA (guanine-N(7)-)-methyltransferase.